The following is a 687-amino-acid chain: DNA ligase (687 aa).

NAD(+) contacts are provided by residues Asp34–Asp38, Ser83–Leu84, and Glu117. The N6-AMP-lysine intermediate role is filled by Lys119. Residues Arg140, Glu182, Lys298, and Lys322 each coordinate NAD(+). The Zn(2+) site is built by Cys416, Cys419, Cys434, and Cys439. The BRCT domain maps to Glu609–Glu687.

The protein belongs to the NAD-dependent DNA ligase family. LigA subfamily. The cofactor is Mg(2+). It depends on Mn(2+) as a cofactor.

It catalyses the reaction NAD(+) + (deoxyribonucleotide)n-3'-hydroxyl + 5'-phospho-(deoxyribonucleotide)m = (deoxyribonucleotide)n+m + AMP + beta-nicotinamide D-nucleotide.. Functionally, DNA ligase that catalyzes the formation of phosphodiester linkages between 5'-phosphoryl and 3'-hydroxyl groups in double-stranded DNA using NAD as a coenzyme and as the energy source for the reaction. It is essential for DNA replication and repair of damaged DNA. This Anaeromyxobacter dehalogenans (strain 2CP-C) protein is DNA ligase.